The sequence spans 280 residues: Pantothenate synthetase (280 aa).

ATP is bound at residue methionine 30–histidine 37. Histidine 37 (proton donor) is an active-site residue. Residue glutamine 61 participates in (R)-pantoate binding. Residue glutamine 61 coordinates beta-alanine. Residue glycine 147–aspartate 150 coordinates ATP. Glutamine 153 contacts (R)-pantoate. Residues valine 176 and methionine 184–arginine 187 contribute to the ATP site.

Belongs to the pantothenate synthetase family. As to quaternary structure, homodimer.

It localises to the cytoplasm. The catalysed reaction is (R)-pantoate + beta-alanine + ATP = (R)-pantothenate + AMP + diphosphate + H(+). It participates in cofactor biosynthesis; (R)-pantothenate biosynthesis; (R)-pantothenate from (R)-pantoate and beta-alanine: step 1/1. Catalyzes the condensation of pantoate with beta-alanine in an ATP-dependent reaction via a pantoyl-adenylate intermediate. The chain is Pantothenate synthetase from Thermosipho melanesiensis (strain DSM 12029 / CIP 104789 / BI429).